The sequence spans 201 residues: Dephospho-CoA kinase (201 aa).

A DPCK domain is found at 4–201 (VIGLTGGIAS…LLDTWSNIEK (198 aa)). 12–17 (ASGKST) contributes to the ATP binding site.

This sequence belongs to the CoaE family.

The protein localises to the cytoplasm. It carries out the reaction 3'-dephospho-CoA + ATP = ADP + CoA + H(+). Its pathway is cofactor biosynthesis; coenzyme A biosynthesis; CoA from (R)-pantothenate: step 5/5. Catalyzes the phosphorylation of the 3'-hydroxyl group of dephosphocoenzyme A to form coenzyme A. In Bacillus licheniformis (strain ATCC 14580 / DSM 13 / JCM 2505 / CCUG 7422 / NBRC 12200 / NCIMB 9375 / NCTC 10341 / NRRL NRS-1264 / Gibson 46), this protein is Dephospho-CoA kinase.